Consider the following 96-residue polypeptide: Small ribosomal subunit protein bS6 (96 aa).

It belongs to the bacterial ribosomal protein bS6 family.

Its function is as follows. Binds together with bS18 to 16S ribosomal RNA. The chain is Small ribosomal subunit protein bS6 from Streptococcus suis (strain 98HAH33).